Reading from the N-terminus, the 89-residue chain is UPF0237 protein lin0537 (89 aa).

In terms of domain architecture, ACT spans 4-78; it reads VLTVIGKDNV…EELQVKIHIQ (75 aa).

The protein belongs to the UPF0237 family.

The sequence is that of UPF0237 protein lin0537 from Listeria innocua serovar 6a (strain ATCC BAA-680 / CLIP 11262).